A 57-amino-acid chain; its full sequence is uncharacterized protein (57 aa).

A disordered region spans residues 1 to 57; sequence MITPIGKNSNSNSNSNSNSNSNSNSNSNSNSNSNSNSNSNSNSNSNSNSNSNSNSNN. The segment covering 8 to 57 has biased composition (low complexity); that stretch reads NSNSNSNSNSNSNSNSNSNSNSNSNSNSNSNSNSNSNSNSNSNSNSNSNN.

This is an uncharacterized protein from Dictyostelium discoideum (Social amoeba).